The sequence spans 425 residues: GTPase Obg (425 aa).

The region spanning 1 to 158 (MFIDKAKIYV…REIILELKLL (158 aa)) is the Obg domain. Residues 159–331 (ADVGLVGFPN…LMAEVSKTLA (173 aa)) enclose the OBG-type G domain. GTP contacts are provided by residues 165 to 172 (GFPNVGKS), 190 to 194 (FTTLK), 212 to 215 (DIPG), 282 to 285 (NKSD), and 312 to 314 (SAA). Residues Ser-172 and Thr-192 each coordinate Mg(2+). The OCT domain maps to 345–425 (LFIPEEKRFT…LNDFEFEFVI (81 aa)).

The protein belongs to the TRAFAC class OBG-HflX-like GTPase superfamily. OBG GTPase family. In terms of assembly, monomer. It depends on Mg(2+) as a cofactor.

It is found in the cytoplasm. Functionally, an essential GTPase which binds GTP, GDP and possibly (p)ppGpp with moderate affinity, with high nucleotide exchange rates and a fairly low GTP hydrolysis rate. Plays a role in control of the cell cycle, stress response, ribosome biogenesis and in those bacteria that undergo differentiation, in morphogenesis control. This chain is GTPase Obg, found in Clostridium tetani (strain Massachusetts / E88).